Here is a 603-residue protein sequence, read N- to C-terminus: Elongation factor 4 (603 aa).

The tr-type G domain occupies 9 to 191 (SNIRNFSIIA…RIVRQIPPPK (183 aa)). Residues 21–26 (DHGKST) and 138–141 (NKID) each bind GTP.

The protein belongs to the TRAFAC class translation factor GTPase superfamily. Classic translation factor GTPase family. LepA subfamily.

The protein localises to the cell inner membrane. The enzyme catalyses GTP + H2O = GDP + phosphate + H(+). In terms of biological role, required for accurate and efficient protein synthesis under certain stress conditions. May act as a fidelity factor of the translation reaction, by catalyzing a one-codon backward translocation of tRNAs on improperly translocated ribosomes. Back-translocation proceeds from a post-translocation (POST) complex to a pre-translocation (PRE) complex, thus giving elongation factor G a second chance to translocate the tRNAs correctly. Binds to ribosomes in a GTP-dependent manner. The chain is Elongation factor 4 from Idiomarina loihiensis (strain ATCC BAA-735 / DSM 15497 / L2-TR).